Here is a 190-residue protein sequence, read N- to C-terminus: Proline-rich protein 3 (190 aa).

3 disordered regions span residues 1-94 (MPKR…GLGP), 110-130 (PPFP…KEAR), and 142-161 (KNTY…SDRP). A compositionally biased stretch (pro residues) spans 37–48 (MGPPSLLGPPPM). The C3H1-type zinc finger occupies 157-185 (KSDRPVCRHFSKKGHCRYEDHCAFYHPGV).

In Mus musculus (Mouse), this protein is Proline-rich protein 3 (Prr3).